We begin with the raw amino-acid sequence, 648 residues long: DNA mismatch repair protein MutL (648 aa).

The disordered stretch occupies residues 336–443; that stretch reads ERPFEPSSPQ…SGSAGESRAR (108 aa). The span at 370–381 shows a compositional bias: polar residues; that stretch reads SPESKTHSTWNE. The segment covering 383–410 has biased composition (basic and acidic residues); it reads SRVDTSRAETSRESRIDSPLGERTRDIA.

The protein belongs to the DNA mismatch repair MutL/HexB family.

This protein is involved in the repair of mismatches in DNA. It is required for dam-dependent methyl-directed DNA mismatch repair. May act as a 'molecular matchmaker', a protein that promotes the formation of a stable complex between two or more DNA-binding proteins in an ATP-dependent manner without itself being part of a final effector complex. The sequence is that of DNA mismatch repair protein MutL from Shewanella sp. (strain ANA-3).